The following is a 244-amino-acid chain: 5-oxoprolinase subunit A (244 aa).

The protein belongs to the LamB/PxpA family. As to quaternary structure, forms a complex composed of PxpA, PxpB and PxpC.

The enzyme catalyses 5-oxo-L-proline + ATP + 2 H2O = L-glutamate + ADP + phosphate + H(+). Catalyzes the cleavage of 5-oxoproline to form L-glutamate coupled to the hydrolysis of ATP to ADP and inorganic phosphate. The protein is 5-oxoprolinase subunit A of Escherichia coli O139:H28 (strain E24377A / ETEC).